We begin with the raw amino-acid sequence, 427 residues long: Serine--tRNA ligase (427 aa).

233–235 (TAE) contacts L-serine. 264 to 266 (RSE) is a binding site for ATP. Glutamate 287 contacts L-serine. 351 to 354 (EISS) lines the ATP pocket. Serine 386 lines the L-serine pocket.

It belongs to the class-II aminoacyl-tRNA synthetase family. Type-1 seryl-tRNA synthetase subfamily. As to quaternary structure, homodimer. The tRNA molecule binds across the dimer.

Its subcellular location is the cytoplasm. It carries out the reaction tRNA(Ser) + L-serine + ATP = L-seryl-tRNA(Ser) + AMP + diphosphate + H(+). The enzyme catalyses tRNA(Sec) + L-serine + ATP = L-seryl-tRNA(Sec) + AMP + diphosphate + H(+). Its pathway is aminoacyl-tRNA biosynthesis; selenocysteinyl-tRNA(Sec) biosynthesis; L-seryl-tRNA(Sec) from L-serine and tRNA(Sec): step 1/1. Its function is as follows. Catalyzes the attachment of serine to tRNA(Ser). Is also able to aminoacylate tRNA(Sec) with serine, to form the misacylated tRNA L-seryl-tRNA(Sec), which will be further converted into selenocysteinyl-tRNA(Sec). The polypeptide is Serine--tRNA ligase (Dechloromonas aromatica (strain RCB)).